The following is a 494-amino-acid chain: Nuclear distribution protein PAC1 (494 aa).

Residues 14–46 (QKNELDKSVLRYLNWNYKQTVRHEHAQDYESVR) form the LisH domain. Residues 90–123 (NSIVRLQKKIIELEQNTETLVSQIKDLNTQVSEL) are a coiled coil. 7 WD repeats span residues 153–192 (NVES…IPLA), 196–244 (SHTK…CKFQ), 251–292 (GHEH…SLKT), 295–334 (PHSQ…SVGT), 347–395 (HFIE…LMAH), 415–454 (GHLS…HVWE), and 457–492 (HTGF…SNVF).

Belongs to the WD repeat LIS1/nudF family. Self-associates. Interacts with NDL1 and dynein.

The protein resides in the cytoplasm. It localises to the cytoskeleton. It is found in the spindle pole. Positively regulates the activity of the minus-end directed microtubule motor protein dynein. Plays a central role in positioning the mitotic spindle at the bud neck during cell division. Targets cytoplasmic dynein to microtubule plus ends, thereby promoting dynein-mediated microtubule sliding along the bud cortex and consequently the movement of the mitotic spindle to the bud neck. The polypeptide is Nuclear distribution protein PAC1 (Saccharomyces cerevisiae (strain Lalvin EC1118 / Prise de mousse) (Baker's yeast)).